Consider the following 614-residue polypeptide: Zinc metalloproteinase-disintegrin-like protein F1 (614 aa).

Positions 1–20 (MLQVLLVTICLAVFPYQGSS) are cleaved as a signal peptide. Residues 21-192 (IILESGNVND…IKASQFILTP (172 aa)) constitute a propeptide that is removed on maturation. Residues 167–173 (PKKCGVT) carry the Cys-switch; controls maturation motif. A Pyrrolidone carboxylic acid (Glu) modification is found at glutamate 193. The Peptidase M12B domain maps to 202 to 398 (KYIKLAIVVD…HTPRCILNEP (197 aa)). Asparagine 221 is a glycosylation site (N-linked (GlcNAc...) asparagine). 3 cysteine pairs are disulfide-bonded: cysteine 313–cysteine 393, cysteine 353–cysteine 377, and cysteine 355–cysteine 360. Histidine 338 provides a ligand contact to Zn(2+). The Metal-binding signature appears at 338-349 (HELGHNLGINHD). The active-site Proton acceptor is the glutamate 339. 2 residues coordinate Zn(2+): histidine 342 and histidine 348. The Disintegrin domain occupies 406 to 492 (PAVCGNYVVE…ECPMDHIQKN (87 aa)). Residues valine 408, asparagine 411, glutamate 415, glutamate 418, and aspartate 421 each coordinate Ca(2+). 14 disulfides stabilise this stretch: cysteine 409-cysteine 438, cysteine 420-cysteine 433, cysteine 422-cysteine 428, cysteine 432-cysteine 455, cysteine 446-cysteine 452, cysteine 451-cysteine 477, cysteine 464-cysteine 484, cysteine 471-cysteine 503, cysteine 496-cysteine 508, cysteine 515-cysteine 565, cysteine 530-cysteine 575, cysteine 543-cysteine 553, cysteine 560-cysteine 601, and cysteine 595-cysteine 607. The short motif at 470–472 (ECD) is the D/ECD-tripeptide element. Aspartate 472, glutamate 475, and aspartate 487 together coordinate Ca(2+). Asparagine 534 is a glycosylation site (N-linked (GlcNAc...) asparagine).

This sequence belongs to the venom metalloproteinase (M12B) family. P-III subfamily. P-IIIa sub-subfamily. In terms of assembly, monomer. Zn(2+) is required as a cofactor. N-glycosylated. Post-translationally, the N-terminus is blocked. Expressed by the venom gland (at protein level). Expressed by the venom gland.

Its subcellular location is the secreted. Its activity is regulated as follows. The alpha-fibrinogenase activity is inhibited by EDTA, but not by pefabloc. Its function is as follows. Zinc metalloprotease that has fibrinogenolytic activity. Does not have hemorrhagic activity in rats. Cleaves insulin B chain at '38-Ala-|-Leu-39' and '40-Tyr-|-Leu-41' bonds. Hydrolyzes only partially and weakly isolated extracellular matrix (ECM) bovine fibronectin and basal membrane (BM) protein human collagen IV in vitro. Murine laminin is not hydrolyzed, neither isolated nor in a solubilized BM preparation. Nidogen is hydrolyzed at '350-Ser-|-Phe-351' bond in a solubilized BM preparation. Hydrolyzes plasma proteins involved in blood coagulation in vitro. Has alpha-fibrinogenase activity cleaving human fibrinogen alpha chain at '432-Lys-|-Leu-433' bond, but does not cleave beta or gamma chains. Does not cleave fibrin. Hydrolyzes only partially bovine prothrombin at '200-Ser-|-Gly-201' bond, factor X (FX) heavy chain, and very slowly, FX light chain and plasminogen in vitro, without activating any of them. Has no effect in plasma thrombin generation. Does not inhibit platelet aggregation induced by collagen in vitro. May have a delayed pathological action as an anticoagulant in envenomed patients after they received serotherapy as it is not recognized by the venom antiserum. The sequence is that of Zinc metalloproteinase-disintegrin-like protein F1 from Vipera ammodytes ammodytes (Western sand viper).